A 181-amino-acid polypeptide reads, in one-letter code: Trafficking protein particle complex subunit 3-like protein (181 aa).

Cys68 carries the S-palmitoyl cysteine lipid modification.

The protein belongs to the TRAPP small subunits family. BET3 subfamily. Homodimer. Component of the multisubunit TRAPP (transport protein particle) complex, which includes at least TRAPPC2, TRAPPC2L, TRAPPC3, TRAPPC3L, TRAPPC4, TRAPPC5, TRAPPC8, TRAPPC9, TRAPPC10, TRAPPC11 and TRAPPC12.

The protein localises to the golgi apparatus. Its subcellular location is the cis-Golgi network. It is found in the endoplasmic reticulum. Functionally, may play a role in vesicular transport from endoplasmic reticulum to Golgi. This chain is Trafficking protein particle complex subunit 3-like protein (Trappc3l), found in Mus musculus (Mouse).